Here is a 50-residue protein sequence, read N- to C-terminus: Defensin D1 (50 aa).

4 disulfides stabilise this stretch: Cys3–Cys50, Cys14–Cys35, Cys20–Cys44, and Cys24–Cys46.

Post-translationally, contains 4 disulfide bonds.

The protein resides in the secreted. Functionally, antimicrobial peptide active against fungi, Gram-positive and Gram-negative bacteria. Inhibits growth of hyphae in the fungi A.niger (IC(50)=3.5 ug/ml), B.sorokiniana (IC(50)=3.0 ug/ml), F.oxysporum (IC(50)=9.5 ug/ml), F.graminearum (IC(50)=6.9 ug/ml), F.culmorum (IC(50)=6.9 ug/ml) and B.cinerea (IC(50)=27.4 ug/ml). Has no effect on spore germination. Destroys spores in germinated conidia by disruption of cell walls and membranes in A.niger and B.sorokiniana. Causes vacuolization of germinated macro- and microconidia in F.oxysporum, F.graminearum and F.culmorum. Strongly inhibits growth of P.infestans on potato tubers above concentrations of 13.6 ug/ml. Inhibits growth of Gram-positive bacteria C.michiganensis and B.subtilis and of Gram-negative bacteria P.syringae, E.carotovora and E.coli. This chain is Defensin D1, found in Nigella sativa (Black cumin).